The sequence spans 434 residues: MSIITDVYAREVLDSRGNPTLEVEVYTESGAFGRGMVPSGASTGEHEAVELRDGDKSRYGGLGTQKAVDNVNNVIAEAIIGYDVRDQQAIDRAMIALDGTPNKGKLGANAILGVSIAVARAAADYLEVPLYSYLGGFNTKVLPTPMMNIINGGSHSDAPIAFQEFMILPVGAPTFKEALRYGAEIFHALKKILKSRGLETAVGDEGGFAPRFEGTEDGVETIIAAIEAAGYVPGKDVFIGFDCASSEFYDKERKVYDYTKFEGEGAAVRTSAEQIDYLEELVNKYPIITIEDGMDENDWDGWKALTERLGKKVQLVGDDFFVTNTDYLARGIKEGAANSILIKVNQIGTLTETFEAIEMAKEAGYTAVVSHRSGETEDSTIADIAVATNAGQIKTGSLSRTDRIAKYNQLLRIEDQLGEVAQYKGLQAFYNLKK.

Gln163 is a binding site for (2R)-2-phosphoglycerate. Glu205 functions as the Proton donor in the catalytic mechanism. Mg(2+) is bound by residues Asp242, Glu291, and Asp318. (2R)-2-phosphoglycerate contacts are provided by Lys343, Arg372, Ser373, and Lys394. Lys343 (proton acceptor) is an active-site residue.

This sequence belongs to the enolase family. The cofactor is Mg(2+).

It is found in the cytoplasm. The protein resides in the secreted. Its subcellular location is the cell surface. The catalysed reaction is (2R)-2-phosphoglycerate = phosphoenolpyruvate + H2O. Its pathway is carbohydrate degradation; glycolysis; pyruvate from D-glyceraldehyde 3-phosphate: step 4/5. In terms of biological role, catalyzes the reversible conversion of 2-phosphoglycerate (2-PG) into phosphoenolpyruvate (PEP). It is essential for the degradation of carbohydrates via glycolysis. This is Enolase from Streptococcus sanguinis (strain SK36).